The primary structure comprises 1199 residues: DNA-directed RNA polymerase subunit beta' (1199 aa).

Zn(2+) contacts are provided by cysteine 60, cysteine 62, cysteine 75, and cysteine 78. Positions 449, 451, and 453 each coordinate Mg(2+). 4 residues coordinate Zn(2+): cysteine 818, cysteine 892, cysteine 899, and cysteine 902.

It belongs to the RNA polymerase beta' chain family. As to quaternary structure, the RNAP catalytic core consists of 2 alpha, 1 beta, 1 beta' and 1 omega subunit. When a sigma factor is associated with the core the holoenzyme is formed, which can initiate transcription. The cofactor is Mg(2+). It depends on Zn(2+) as a cofactor.

It catalyses the reaction RNA(n) + a ribonucleoside 5'-triphosphate = RNA(n+1) + diphosphate. Functionally, DNA-dependent RNA polymerase catalyzes the transcription of DNA into RNA using the four ribonucleoside triphosphates as substrates. The sequence is that of DNA-directed RNA polymerase subunit beta' from Exiguobacterium sibiricum (strain DSM 17290 / CCUG 55495 / CIP 109462 / JCM 13490 / 255-15).